We begin with the raw amino-acid sequence, 210 residues long: Large ribosomal subunit protein uL4 (210 aa).

Residues 46-89 (QGTASTLTRSEVRGGGRKPYKQKGTGRARQGSIRTPLRPGGGII) are disordered. The segment covering 60 to 71 (GGRKPYKQKGTG) has biased composition (basic residues).

The protein belongs to the universal ribosomal protein uL4 family. In terms of assembly, part of the 50S ribosomal subunit.

One of the primary rRNA binding proteins, this protein initially binds near the 5'-end of the 23S rRNA. It is important during the early stages of 50S assembly. It makes multiple contacts with different domains of the 23S rRNA in the assembled 50S subunit and ribosome. In terms of biological role, forms part of the polypeptide exit tunnel. The sequence is that of Large ribosomal subunit protein uL4 from Prochlorococcus marinus (strain MIT 9215).